The following is a 967-amino-acid chain: MSLFNHLLSRALPLWLLFFINFLVLLGKSQQEVLQVQVGIVLDTNATLAALSLRAINMSLSEFYNTHNGFKTRIVLNIRDSKRTVVGAAASALYLIKKREVVAIIGPGNSMQAPFLINLGNQSQVPIISFSASSPVLDSLRSPYFIRATHDDSSQVHAISAIIESFRWREVVPIYADNEFGEGILPYLVDAFQEINVRIRYRSAISVHSTDDLVKKELYKLMTMPTRVFIVHMLPDLGSRLFSIAKEIGMMTKGYVWIVTNGIADQMSVMGESSLENMHGVLGVKTYFSRSKELMYLETRWRKRFGGEELNNFECWGYDTATALAMSIEEISSNVNMSFSQTKRNTSRDDTGTDLDDLSFALSGPKLLQALATVSFKGVAGRFQLKNGKLEATTFKIVNIEESGERTVGFWKSKVGLVKSLRVNQTGIKISHSSHRLRPIIWPGDTIFVPKGWEFPTNAKKLRIAVPKKDGFNNFVEVTKDANTNAPTITGFCIDVFDTAMRQMPYAVPYEYIPFETPDGKPRGSYDEMVYHVFLGEFDGAVGDTTILANRSTYVDFALPYSETGIVVVVPVKDEREKGKWVFLKPLTRELWFLTAASFLYIGIMVWIFEYQASGDFRKQSIINKISNVFYFSFSTLFFAHMRPSESIFTRVLVVVWCFVLLILTQSYTATLTSMLTVQELRPTVRHMDDLRNSGVNIGYQTGSFTFERLKQMGYKESRLKTYDTPQEMHELFLKKSSNGGIDAAFDEVAYVKLFMAKYCSKYTIIEPTFKADGFGFAFPLGSPLVPDLSRQILNITEGETMKAIENKWLLGEKHCLDSTTSDSPIRLDHHSFEALFTIVFVVSMLLLLAMLVCRRYRQESKSGEINANNSPTDGNMRAPPNQPTDDNMRAPTSPPIDDQVLEPPGPALNEADDQDQLLNDEVNVGDRNEVDIIVEVDPTLVHRRNLITSKTIPTRRAALFSRIKSA.

The first 31 residues, 1 to 31 (MSLFNHLLSRALPLWLLFFINFLVLLGKSQQ), serve as a signal peptide directing secretion. The Extracellular segment spans residues 32 to 590 (EVLQVQVGIV…WVFLKPLTRE (559 aa)). N-linked (GlcNAc...) asparagine glycans are attached at residues asparagine 45, asparagine 57, asparagine 121, asparagine 336, asparagine 345, asparagine 424, and asparagine 550. A helical membrane pass occupies residues 591 to 611 (LWFLTAASFLYIGIMVWIFEY). The Cytoplasmic portion of the chain corresponds to 612-621 (QASGDFRKQS). Residues 622-642 (IINKISNVFYFSFSTLFFAHM) traverse the membrane as a helical segment. The Cytoplasmic portion of the chain corresponds to 643-651 (RPSESIFTR). The chain crosses the membrane as a helical span at residues 652–672 (VLVVVWCFVLLILTQSYTATL). The Extracellular portion of the chain corresponds to 673–832 (TSMLTVQELR…DSPIRLDHHS (160 aa)). An N-linked (GlcNAc...) asparagine glycan is attached at asparagine 795. The helical transmembrane segment at 833–853 (FEALFTIVFVVSMLLLLAMLV) threads the bilayer. The Cytoplasmic segment spans residues 854–967 (CRRYRQESKS…AALFSRIKSA (114 aa)). A compositionally biased stretch (polar residues) spans 864 to 874 (GEINANNSPTD). Positions 864–913 (GEINANNSPTDGNMRAPPNQPTDDNMRAPTSPPIDDQVLEPPGPALNEAD) are disordered.

This sequence belongs to the glutamate-gated ion channel (TC 1.A.10.1) family. May form heteromers. In terms of tissue distribution, expressed predominantly in roots.

The protein resides in the membrane. In terms of biological role, glutamate-gated receptor that probably acts as a non-selective cation channel. May be involved in light-signal transduction and calcium homeostasis via the regulation of calcium influx into cells. The sequence is that of Glutamate receptor 2.6 (GLR2.6) from Arabidopsis thaliana (Mouse-ear cress).